The following is a 174-amino-acid chain: Non-classical export protein 2 homolog 1 (174 aa).

Residues 1-7 (MLSAADN) are Cytoplasmic-facing. Residues 8–28 (LVRIINAVFLIISIGLISGLI) traverse the membrane as a helical segment. Residues 29 to 41 (GTQTKHSSRVNFC) lie on the Extracellular side of the membrane. The helical transmembrane segment at 42 to 62 (MFAAVYGLVTDSLYGFLANFW) threads the bilayer. The Cytoplasmic portion of the chain corresponds to 63 to 69 (TSLTYPA). The helical transmembrane segment at 70-90 (ILLVLDFLNFIFTFVAATALA) threads the bilayer. At 91-122 (VGIRCHSCKNKTYLEQNKIIQGSSSRCHQSQA) the chain is on the extracellular side. The chain crosses the membrane as a helical span at residues 123–143 (AVAFFYFSCFLFLIKVTVATM). Residues 144 to 174 (GMMQNGGFGSNTGFSRRRARRQMGIPTISQV) are Cytoplasmic-facing.

This sequence belongs to the NCE102 family.

Its subcellular location is the cell membrane. Functionally, involved in membrane organization. Required for the formation of membrane compartments of CAN1 (MCCs), localization of CAN1 at the MCCs and subsequent invagination of the plasma membrane at the MCCs sites. Involved in eisosome organization and might act as a sensor of sphingolipids that regulates plasma membrane function. Involved in a novel pathway of export of proteins that lack a cleavable signal sequence. Non-classical export pathway also functions as an alternative clearance/detoxification pathway to eliminate damaged material, when the basic repair pathway is not sufficient. In Saccharomyces cerevisiae (strain ATCC 204508 / S288c) (Baker's yeast), this protein is Non-classical export protein 2 homolog 1 (FHN1).